Reading from the N-terminus, the 195-residue chain is Calcineurin B homologous protein 1 (195 aa).

Gly-2 is lipidated: N-myristoyl glycine. EF-hand domains are found at residues 26 to 61 (SQIT…AINP), 66 to 101 (IINA…KSKD), 110 to 145 (SRSN…MVGV), and 151 to 186 (QLGS…VDVE). Residues Asp-123, Asp-125, Asp-127, Lys-129, Glu-134, Asp-164, Asp-166, Asp-168, and Glu-175 each contribute to the Ca(2+) site.

The protein belongs to the calcineurin regulatory subunit family. CHP subfamily. In terms of assembly, monomer. In terms of processing, phosphorylated. Post-translationally, calcium-binding or N-myristoylation are necessary for the Na(+)/H(+) exchange activities.

It is found in the nucleus. It localises to the cytoplasm. The protein localises to the cytoskeleton. Its subcellular location is the endomembrane system. The protein resides in the endoplasmic reticulum-Golgi intermediate compartment. It is found in the endoplasmic reticulum. It localises to the cell membrane. The protein localises to the membrane. Its function is as follows. Calcium-binding protein involved in different processes such as regulation of vesicular trafficking, plasma membrane Na(+)/H(+) exchanger and gene transcription. Involved in the constitutive exocytic membrane traffic. Mediates the association between microtubules and membrane-bound organelles of the endoplasmic reticulum and Golgi apparatus and is also required for the targeting and fusion of transcytotic vesicles (TCV) with the plasma membrane. Functions as an integral cofactor in cell pH regulation by controlling plasma membrane-type Na(+)/H(+) exchange activity. Inhibits serum- and GTPase-stimulated Na(+)/H(+) exchange. Plays a role as an inhibitor of ribosomal RNA transcription. Acts as a negative regulator of the calcineurin/NFAT signaling pathway. The sequence is that of Calcineurin B homologous protein 1 (CHP1) from Gallus gallus (Chicken).